Reading from the N-terminus, the 231-residue chain is Large ribosomal subunit protein uL1 (231 aa).

It belongs to the universal ribosomal protein uL1 family. In terms of assembly, part of the 50S ribosomal subunit.

Its function is as follows. Binds directly to 23S rRNA. The L1 stalk is quite mobile in the ribosome, and is involved in E site tRNA release. Functionally, protein L1 is also a translational repressor protein, it controls the translation of the L11 operon by binding to its mRNA. The polypeptide is Large ribosomal subunit protein uL1 (Cupriavidus pinatubonensis (strain JMP 134 / LMG 1197) (Cupriavidus necator (strain JMP 134))).